Here is a 381-residue protein sequence, read N- to C-terminus: Alanine racemase, catabolic (381 aa).

Catalysis depends on K55, which acts as the Proton acceptor; specific for D-alanine. K55 is subject to N6-(pyridoxal phosphate)lysine. Position 154 (R154) interacts with substrate. Residue Y276 is the Proton acceptor; specific for L-alanine of the active site. M322 is a substrate binding site.

Belongs to the alanine racemase family. Pyridoxal 5'-phosphate is required as a cofactor.

The enzyme catalyses L-alanine = D-alanine. In terms of biological role, isomerizes L-alanine to D-alanine which is then oxidized to pyruvate by DadA. This chain is Alanine racemase, catabolic (dadB), found in Mesorhizobium japonicum (strain LMG 29417 / CECT 9101 / MAFF 303099) (Mesorhizobium loti (strain MAFF 303099)).